The following is a 132-amino-acid chain: Agouti-signaling protein (132 aa).

Residues 1–22 (MDVTRLLLATLLVFLCFFTAYS) form the signal peptide. N-linked (GlcNAc...) asparagine glycosylation occurs at N39. Residues 58 to 88 (KSKQMSRKEAEKKRSSKKEASMKKVARPRTP) are disordered. Residues 63 to 79 (SRKEAEKKRSSKKEASM) show a composition bias toward basic and acidic residues. 5 disulfides stabilise this stretch: C93-C108, C100-C114, C107-C125, C111-C132, and C116-C123. In terms of domain architecture, Agouti spans 93-132 (CVATRDSCKPPAPACCDPCASCQCRFFRSACSCRVLSLNC).

The protein resides in the secreted. In terms of biological role, involved in the regulation of melanogenesis. The binding of ASP to MC1R precludes alpha-MSH initiated signaling and thus blocks production of cAMP, leading to a down-regulation of eumelanogenesis (brown/black pigment) and thus increasing synthesis of pheomelanin (yellow/red pigment). This Cercopithecus mitis (Blue monkey) protein is Agouti-signaling protein (ASIP).